The following is a 229-amino-acid chain: Urease accessory protein UreF (229 aa).

The protein belongs to the UreF family. In terms of assembly, ureD, UreF and UreG form a complex that acts as a GTP-hydrolysis-dependent molecular chaperone, activating the urease apoprotein by helping to assemble the nickel containing metallocenter of UreC. The UreE protein probably delivers the nickel.

The protein localises to the cytoplasm. In terms of biological role, required for maturation of urease via the functional incorporation of the urease nickel metallocenter. This is Urease accessory protein UreF from Corynebacterium efficiens (strain DSM 44549 / YS-314 / AJ 12310 / JCM 11189 / NBRC 100395).